A 311-amino-acid chain; its full sequence is Malate dehydrogenase (311 aa).

NAD(+) is bound by residues 7–13 (GAAGGIG) and Asp34. Residues Arg81 and Arg87 each coordinate substrate. Residues Asn94 and 117–119 (ITN) contribute to the NAD(+) site. 2 residues coordinate substrate: Asn119 and Arg153. His177 functions as the Proton acceptor in the catalytic mechanism. An NAD(+)-binding site is contributed by Met227.

Belongs to the LDH/MDH superfamily. MDH type 1 family. Homodimer.

It catalyses the reaction (S)-malate + NAD(+) = oxaloacetate + NADH + H(+). In terms of biological role, catalyzes the reversible oxidation of malate to oxaloacetate. The polypeptide is Malate dehydrogenase (Shewanella amazonensis (strain ATCC BAA-1098 / SB2B)).